The chain runs to 999 residues: Protein Smaug (999 aa).

Residues 1–37 show a composition bias toward polar residues; that stretch reads MKYATGTDNAMTSGISGQTNNSNSVSNEMQPTTSTPT. Disordered regions lie at residues 1 to 45, 50 to 69, and 321 to 370; these read MKYA…EATS, TATYANGNPNSNANPSQSQP, and CSSV…GSSS. The span at 321-338 shows a compositional bias: low complexity; sequence CSSVASSSMCPASGSRSS. 2 positions are modified to phosphoserine: S564 and S575. The interval 583-763 is interaction with cup; that stretch reads EFKPNYIKFH…KDLKFKLSKM (181 aa). Positions 600–654 constitute an SAM domain; it reads GIGLWLKSLRLHKYIELFKNMTYEEMLLITEDFLQSVGVTKGASHKLALCIDKLK. The tract at residues 773–892 is disordered; the sequence is HVKPAGVGPN…HHHAQQMQQM (120 aa). Composition is skewed to polar residues over residues 801–822 and 854–864; these read KNGSNDRINNRKNSNDMLNFSL and HQPQYKSSSYP. S972 bears the Phosphoserine mark.

This sequence belongs to the SMAUG family. As to quaternary structure, interacts with oskar (osk). Binds to the 3'-UTR of nos. Interacts with cup, which in turn recruits eIF4-E, leading to an indirect interaction between smg and eIF4-E that prevents mRNA translation.

Its subcellular location is the cytoplasm. In terms of biological role, translation regulator that binds to the 3'-UTR of specific mRNAs such as nanos (nos) and prevent their translation. Prevents translation of unlocalized nos in the bulk cytoplasm via the recruitment of cup. The protein is Protein Smaug (smg) of Drosophila yakuba (Fruit fly).